The following is a 420-amino-acid chain: Tyrosine--tRNA ligase (420 aa).

L-tyrosine is bound at residue tyrosine 36. The short motif at 41–50 (PTADSMHIGH) is the 'HIGH' region element. L-tyrosine-binding residues include tyrosine 170 and glutamine 174. The short motif at 231–235 (KFGKS) is the 'KMSKS' region element. Position 234 (lysine 234) interacts with ATP. Residues 353–420 (TNIVDFIVEA…KKKYFMVKYK (68 aa)) form the S4 RNA-binding domain.

The protein belongs to the class-I aminoacyl-tRNA synthetase family. TyrS type 1 subfamily. Homodimer.

It localises to the cytoplasm. The enzyme catalyses tRNA(Tyr) + L-tyrosine + ATP = L-tyrosyl-tRNA(Tyr) + AMP + diphosphate + H(+). Functionally, catalyzes the attachment of tyrosine to tRNA(Tyr) in a two-step reaction: tyrosine is first activated by ATP to form Tyr-AMP and then transferred to the acceptor end of tRNA(Tyr). This is Tyrosine--tRNA ligase from Staphylococcus carnosus (strain TM300).